Here is a 101-residue protein sequence, read N- to C-terminus: Replication restart protein PriB (101 aa).

In terms of domain architecture, SSB spans 1 to 101 (MATNHLVLSG…LHAENVELKT (101 aa)).

Belongs to the PriB family. In terms of assembly, homodimer. Interacts with PriA and DnaT. Component of the replication restart primosome. Primosome assembly occurs via a 'hand-off' mechanism. PriA binds to replication forks, subsequently PriB then DnaT bind; DnaT then displaces ssDNA to generate the helicase loading substrate.

In terms of biological role, involved in the restart of stalled replication forks, which reloads the replicative helicase on sites other than the origin of replication; the PriA-PriB pathway is the major replication restart pathway. During primosome assembly it facilitates complex formation between PriA and DnaT on DNA; stabilizes PriA on DNA. Stimulates the DNA unwinding activity of PriA helicase. This Shewanella woodyi (strain ATCC 51908 / MS32) protein is Replication restart protein PriB.